The following is a 264-amino-acid chain: MKKLKLHGFNNLTKSLSFCIYDICYAKTAEERDGYIAYIDELYNANRLTEILSETCSIIGANILNIARQDYEPQGASVTILVSEEPMDPKLIDQTEHPGPLPETVVAHLDKSHICVHTYPESHPEGGLCTFRADIEVSTCGVISPLKALNYLIHQLESDIVTIDYRVRGFTRDVNGMKHFIDHEINSIQNFMSEDMKSLYDMVDVNVYQENIFHTKMLLKEFDLKHYMFHTKPEDLTETERQEITAALWKEMREIYYGRNMPAV.

Serine 112 acts as the Schiff-base intermediate with substrate; via pyruvic acid in catalysis. At serine 112 the chain carries Pyruvic acid (Ser); by autocatalysis. The active-site Proton acceptor; for processing activity is histidine 117. Cysteine 140 acts as the Proton donor; for catalytic activity in catalysis.

It belongs to the prokaryotic AdoMetDC family. Type 2 subfamily. Heterooctamer of four alpha and four beta chains arranged as a tetramer of alpha/beta heterodimers. The cofactor is pyruvate. In terms of processing, is synthesized initially as an inactive proenzyme. Formation of the active enzyme involves a self-maturation process in which the active site pyruvoyl group is generated from an internal serine residue via an autocatalytic post-translational modification. Two non-identical subunits are generated from the proenzyme in this reaction, and the pyruvate is formed at the N-terminus of the alpha chain, which is derived from the carboxyl end of the proenzyme. The post-translation cleavage follows an unusual pathway, termed non-hydrolytic serinolysis, in which the side chain hydroxyl group of the serine supplies its oxygen atom to form the C-terminus of the beta chain, while the remainder of the serine residue undergoes an oxidative deamination to produce ammonia and the pyruvoyl group blocking the N-terminus of the alpha chain.

It carries out the reaction S-adenosyl-L-methionine + H(+) = S-adenosyl 3-(methylsulfanyl)propylamine + CO2. It functions in the pathway amine and polyamine biosynthesis; S-adenosylmethioninamine biosynthesis; S-adenosylmethioninamine from S-adenosyl-L-methionine: step 1/1. Functionally, catalyzes the decarboxylation of S-adenosylmethionine to S-adenosylmethioninamine (dcAdoMet), the propylamine donor required for the synthesis of the polyamines spermine and spermidine from the diamine putrescine. The chain is S-adenosylmethionine decarboxylase proenzyme from Salmonella arizonae (strain ATCC BAA-731 / CDC346-86 / RSK2980).